The chain runs to 342 residues: tRNA N6-adenosine threonylcarbamoyltransferase (342 aa).

Fe cation is bound by residues His111 and His115. Residues 134–138 (LVSGG), Asp167, Gly180, and Asn275 contribute to the substrate site. Fe cation is bound at residue Asp303.

Belongs to the KAE1 / TsaD family. Requires Fe(2+) as cofactor.

The protein resides in the cytoplasm. The catalysed reaction is L-threonylcarbamoyladenylate + adenosine(37) in tRNA = N(6)-L-threonylcarbamoyladenosine(37) in tRNA + AMP + H(+). Required for the formation of a threonylcarbamoyl group on adenosine at position 37 (t(6)A37) in tRNAs that read codons beginning with adenine. Is involved in the transfer of the threonylcarbamoyl moiety of threonylcarbamoyl-AMP (TC-AMP) to the N6 group of A37, together with TsaE and TsaB. TsaD likely plays a direct catalytic role in this reaction. The chain is tRNA N6-adenosine threonylcarbamoyltransferase from Paraburkholderia xenovorans (strain LB400).